The primary structure comprises 296 residues: uncharacterized protein (296 aa).

An N-terminal signal peptide occupies residues 1 to 20 (MRKFIFVLLTLLLVSPFSFA).

This is an uncharacterized protein from Escherichia coli (strain K12).